The sequence spans 385 residues: Flap endonuclease 1 (385 aa).

The N-domain stretch occupies residues 1 to 104; it reads MGILGLSKLI…GELAKRAERR (104 aa). Position 34 (Asp-34) interacts with Mg(2+). Arg-47 and Arg-70 together coordinate DNA. Residues Asp-86, Glu-158, Glu-160, Asp-179, and Asp-181 each contribute to the Mg(2+) site. Positions 122–253 are I-domain; the sequence is GIEKFNRRLV…KRAIELINTY (132 aa). A DNA-binding site is contributed by Glu-158. Residues Gly-231 and Asp-233 each coordinate DNA. Residue Asp-233 coordinates Mg(2+). The tract at residues 336-344 is interaction with PCNA; sequence TQVRLDSFF. The segment at 346-385 is disordered; the sequence is TLPSTPNATNAAKRKADEAKKSANNKKAKTSGGGRGRRPK. A compositionally biased stretch (basic residues) spans 368–385; it reads ANNKKAKTSGGGRGRRPK.

This sequence belongs to the XPG/RAD2 endonuclease family. FEN1 subfamily. Interacts with PCNA. Three molecules of FEN1 bind to one PCNA trimer with each molecule binding to one PCNA monomer. PCNA stimulates the nuclease activity without altering cleavage specificity. Requires Mg(2+) as cofactor. In terms of processing, phosphorylated. Phosphorylation upon DNA damage induces relocalization to the nuclear plasma.

It is found in the nucleus. It localises to the nucleolus. The protein localises to the nucleoplasm. The protein resides in the mitochondrion. In terms of biological role, structure-specific nuclease with 5'-flap endonuclease and 5'-3' exonuclease activities involved in DNA replication and repair. During DNA replication, cleaves the 5'-overhanging flap structure that is generated by displacement synthesis when DNA polymerase encounters the 5'-end of a downstream Okazaki fragment. It enters the flap from the 5'-end and then tracks to cleave the flap base, leaving a nick for ligation. Also involved in the long patch base excision repair (LP-BER) pathway, by cleaving within the apurinic/apyrimidinic (AP) site-terminated flap. Acts as a genome stabilization factor that prevents flaps from equilibrating into structures that lead to duplications and deletions. Also possesses 5'-3' exonuclease activity on nicked or gapped double-stranded DNA, and exhibits RNase H activity. Also involved in replication and repair of rDNA and in repairing mitochondrial DNA. The polypeptide is Flap endonuclease 1 (Drosophila sechellia (Fruit fly)).